A 144-amino-acid chain; its full sequence is Large ribosomal subunit protein uL13 (144 aa).

It belongs to the universal ribosomal protein uL13 family. Part of the 50S ribosomal subunit.

Its function is as follows. This protein is one of the early assembly proteins of the 50S ribosomal subunit, although it is not seen to bind rRNA by itself. It is important during the early stages of 50S assembly. The sequence is that of Large ribosomal subunit protein uL13 from Magnetococcus marinus (strain ATCC BAA-1437 / JCM 17883 / MC-1).